Here is a 289-residue protein sequence, read N- to C-terminus: 2-dehydro-3-deoxyphosphooctonate aldolase (289 aa).

Belongs to the KdsA family.

The protein resides in the cytoplasm. It catalyses the reaction D-arabinose 5-phosphate + phosphoenolpyruvate + H2O = 3-deoxy-alpha-D-manno-2-octulosonate-8-phosphate + phosphate. It participates in carbohydrate biosynthesis; 3-deoxy-D-manno-octulosonate biosynthesis; 3-deoxy-D-manno-octulosonate from D-ribulose 5-phosphate: step 2/3. It functions in the pathway bacterial outer membrane biogenesis; lipopolysaccharide biosynthesis. The polypeptide is 2-dehydro-3-deoxyphosphooctonate aldolase (Cupriavidus necator (strain ATCC 17699 / DSM 428 / KCTC 22496 / NCIMB 10442 / H16 / Stanier 337) (Ralstonia eutropha)).